Here is a 454-residue protein sequence, read N- to C-terminus: MVKGGREALLGGYEMGRTLGEGNFGKVKYARHLATGGHFAVKILDRGRVVSLRAGDQIRREIATLKLLRHPHVVRLHEVAASKTKIYMVLEFVNGGELFERIAVKGKLSEKEGRRLFQQLIDGVSYCHDRGVYHRDLKPENVLVDQKGNIKISDFGLSALPQHLGNDGLLHTTCGSPNYIAPEVLQNKGYDGSLSDIWSCGVILYVMLIGYLPFDDRNIVVLYQKIFKGDTQIPKWLSHSAQNLLRRILEPNPMKRIDMAGIKSHEWFQKDYIPVLPYDDDDEDVQFGARLPAKEQINDEPGDKNSHQINAFQLIGMASSLDLSGFFEDEEVSQRRIRFTSTHPPKDAFDKIESSATELGFQVQRGHSKLKLMRNCKGSKNPESFMVSAEVFELGPSVNVVELRKSNGDPALYRQLCERISSDMGARNTEQIFATASLEDDLQNSNAGTPLFAL.

Positions 13–268 (YEMGRTLGEG…MAGIKSHEWF (256 aa)) constitute a Protein kinase domain. ATP-binding positions include 19-27 (LGEGNFGKV) and K42. The active-site Proton acceptor is the D136. The activation loop stretch occupies residues 154 to 183 (DFGLSALPQHLGNDGLLHTTCGSPNYIAPE). An NAF domain is found at 304-328 (KNSHQINAFQLIGMASSLDLSGFFE). Positions 334–363 (QRRIRFTSTHPPKDAFDKIESSATELGFQV) are PPI.

The protein belongs to the protein kinase superfamily. CAMK Ser/Thr protein kinase family. SNF1 subfamily. It depends on Mn(2+) as a cofactor.

The enzyme catalyses L-seryl-[protein] + ATP = O-phospho-L-seryl-[protein] + ADP + H(+). It carries out the reaction L-threonyl-[protein] + ATP = O-phospho-L-threonyl-[protein] + ADP + H(+). Its function is as follows. CIPK serine-threonine protein kinases interact with CBL proteins. Binding of a CBL protein to the regulatory NAF domain of CIPK protein lead to the activation of the kinase in a calcium-dependent manner. The sequence is that of CBL-interacting protein kinase 17 (CIPK17) from Oryza sativa subsp. japonica (Rice).